The primary structure comprises 398 residues: Cell cycle checkpoint control protein RAD9B (398 aa).

A compositionally biased stretch (polar residues) spans 272 to 281 (RTSSPQSLRL). The tract at residues 272-359 (RTSSPQSLRL…DMEEGQSPSP (88 aa)) is disordered. The segment covering 324–336 (SSSAAETRRASAS) has biased composition (low complexity). Phosphoserine occurs at positions 349 and 358.

It belongs to the rad9 family. Interacts with HUS1, HUS1B, RAD1, RAD9A and RAD17.

This is Cell cycle checkpoint control protein RAD9B (Rad9b) from Rattus norvegicus (Rat).